Reading from the N-terminus, the 788-residue chain is Leucine-rich repeat and fibronectin type-III domain-containing protein 2 (788 aa).

The signal sequence occupies residues 1–20 (METLLGGLLAFGMAFAVVDA). Residues 21 to 52 (CPKYCVCQNLSESLGTLCPSKGLLFVPPDIDR) enclose the LRRNT domain. The Extracellular segment spans residues 21–534 (CPKYCVCQNL…MHSQILGGTM (514 aa)). N-linked (GlcNAc...) asparagine glycosylation is found at Asn-29 and Asn-74. LRR repeat units follow at residues 53–74 (RTVE…DFAN), 77–98 (GLVD…SFLD), 101–122 (SLRS…TLRG), 125–146 (NLQH…AFED), 150–171 (TLED…SVRR), 174–195 (NLHQ…TFAD), and 198–219 (KLAR…PIFA). The 47-residue stretch at 242-288 (NPLHCNCELLWLRRLERDDDLKTCGSPGGLKGRYFWHIREEEFVCEP) folds into the LRRCT domain. One can recognise an Ig-like domain in the interval 289–375 (PLITQHTHKL…GEATATVEVS (87 aa)). Cys-310 and Cys-359 are disulfide-bonded. Asn-332, Asn-341, Asn-384, and Asn-457 each carry an N-linked (GlcNAc...) asparagine glycan. The interval 383–423 (SNSTSRMAPPKSRLSDITGSSKTSRGGGGSGAGEPPKSTPE) is disordered. The Fibronectin type-III domain occupies 422 to 518 (PERAVLVSDV…GCAQFFTKAD (97 aa)). The helical transmembrane segment at 535 to 555 (ILVIGGIIVATLLVFIVILMV) threads the bilayer. Over 556 to 788 (RYKVCNHDAP…SSEWVMESTV (233 aa)) the chain is Cytoplasmic. Positions 620 to 641 (CDSSSSSSLGSGEAAGLSRGPW) are enriched in low complexity. 2 disordered regions span residues 620–655 (CDSS…PSLD) and 668–707 (SQRK…ATRA). A compositionally biased stretch (pro residues) spans 642 to 651 (RLPPPAPRPK). Residues 785–788 (ESTV) carry the PDZ-binding motif.

Belongs to the LRFN family. Forms heteromeric complexes with LRFN1, LRFN3 and LRFN4. Can form homomeric complexes, but not across cell junctions. Can form heteromeric complexes with LRFN5. Interacts with DLG1, DLG3 and DLG4; interaction with DLG4 is mediated by the PDZ-binding domain. Also interacts with DLG2. Interacts with 2 NMDA receptor subunits GRIN1 and GRIN2A.

The protein resides in the membrane. It localises to the synapse. It is found in the postsynaptic cell membrane. Its function is as follows. Promotes neurite outgrowth in hippocampal neurons. Enhances the cell surface expression of GRIN1 and GRIN2A NMDA receptor subunits. May play a role in redistributing DLG4 to the cell periphery. In Rattus norvegicus (Rat), this protein is Leucine-rich repeat and fibronectin type-III domain-containing protein 2 (Lrfn2).